The primary structure comprises 314 residues: NADH-ubiquinone oxidoreductase chain 1 (314 aa).

8 helical membrane passes run 5–25 (IMPLIGSLLLVICVMVGVAFL), 78–98 (FSPIFSLFLSLVIWMCIPYLI), 105–125 (LGVLFFLCCTSLGVYTVMIAG), 151–171 (LALILLSFIFLIGNYNFLNFY), 176–196 (YIWFIFFCFPLGLVWLASCLA), 227–247 (LIFLAEYSSILFMSMLFVVIF), 251–271 (DIYSLMFFFKLTFISFVFIWV), and 294–314 (LSLNYLFFFVGLKIFFISLLF).

It belongs to the complex I subunit 1 family.

It localises to the mitochondrion inner membrane. It catalyses the reaction a ubiquinone + NADH + 5 H(+)(in) = a ubiquinol + NAD(+) + 4 H(+)(out). Its function is as follows. Core subunit of the mitochondrial membrane respiratory chain NADH dehydrogenase (Complex I) that is believed to belong to the minimal assembly required for catalysis. Complex I functions in the transfer of electrons from NADH to the respiratory chain. The immediate electron acceptor for the enzyme is believed to be ubiquinone. This chain is NADH-ubiquinone oxidoreductase chain 1 (ND1), found in Anopheles quadrimaculatus (Common malaria mosquito).